The sequence spans 231 residues: tRNA (guanine-N(1)-)-methyltransferase (231 aa).

Residues glycine 112 and 132 to 137 (LGDFVL) each bind S-adenosyl-L-methionine.

The protein belongs to the RNA methyltransferase TrmD family. Homodimer.

Its subcellular location is the cytoplasm. It carries out the reaction guanosine(37) in tRNA + S-adenosyl-L-methionine = N(1)-methylguanosine(37) in tRNA + S-adenosyl-L-homocysteine + H(+). Specifically methylates guanosine-37 in various tRNAs. In Microcystis aeruginosa (strain NIES-843 / IAM M-2473), this protein is tRNA (guanine-N(1)-)-methyltransferase.